The primary structure comprises 215 residues: Phosphatidylserine decarboxylase proenzyme (215 aa).

Catalysis depends on S184, which acts as the Schiff-base intermediate with substrate; via pyruvic acid. S184 carries the post-translational modification Pyruvic acid (Ser); by autocatalysis.

Belongs to the phosphatidylserine decarboxylase family. PSD-A subfamily. In terms of assembly, heterodimer of a large membrane-associated beta subunit and a small pyruvoyl-containing alpha subunit. Requires pyruvate as cofactor. Post-translationally, is synthesized initially as an inactive proenzyme. Formation of the active enzyme involves a self-maturation process in which the active site pyruvoyl group is generated from an internal serine residue via an autocatalytic post-translational modification. Two non-identical subunits are generated from the proenzyme in this reaction, and the pyruvate is formed at the N-terminus of the alpha chain, which is derived from the carboxyl end of the proenzyme. The post-translation cleavage follows an unusual pathway, termed non-hydrolytic serinolysis, in which the side chain hydroxyl group of the serine supplies its oxygen atom to form the C-terminus of the beta chain, while the remainder of the serine residue undergoes an oxidative deamination to produce ammonia and the pyruvoyl prosthetic group on the alpha chain.

It localises to the cell membrane. The enzyme catalyses a 1,2-diacyl-sn-glycero-3-phospho-L-serine + H(+) = a 1,2-diacyl-sn-glycero-3-phosphoethanolamine + CO2. It functions in the pathway phospholipid metabolism; phosphatidylethanolamine biosynthesis; phosphatidylethanolamine from CDP-diacylglycerol: step 2/2. Its function is as follows. Catalyzes the formation of phosphatidylethanolamine (PtdEtn) from phosphatidylserine (PtdSer). The protein is Phosphatidylserine decarboxylase proenzyme of Ralstonia pickettii (strain 12J).